Reading from the N-terminus, the 424-residue chain is Calreticulin (424 aa).

Positions 1–29 (MAIRARSSSYAAAAVALALALASVAAVAG) are cleaved as a signal peptide. Residue Asn61 is glycosylated (N-linked (GlcNAc...) asparagine). Residues Cys115 and Cys147 are joined by a disulfide bond. 4 residues coordinate an alpha-D-glucoside: Tyr119, Lys121, Tyr138, and Asp145. A run of 7 repeats spans residues 201–212 (KQSGSIYEHWDI), 220–231 (DPEAKKPEDWDD), 237–248 (DPEDKKPEGYDD), 255–266 (DPDAKKPEDWDD), 270–280 (GEWTAPTIPNP), 284–294 (GPWKQKKIKNP), and 298–308 (GKWKAPMIDNP). The 4 X approximate repeats stretch occupies residues 201–266 (KQSGSIYEHW…DAKKPEDWDD (66 aa)). Basic and acidic residues predominate over residues 217–262 (QIKDPEAKKPEDWDDKEYIPDPEDKKPEGYDDIPKEIPDPDAKKPE). The tract at residues 217-289 (QIKDPEAKKP…PEYKGPWKQK (73 aa)) is disordered. The segment at 270 to 308 (GEWTAPTIPNPEYKGPWKQKKIKNPNYQGKWKAPMIDNP) is 3 X approximate repeats. Glu328 contacts an alpha-D-glucoside. A compositionally biased stretch (basic and acidic residues) spans 356-385 (ETWGKHKDAEKAAFDEAEKKKEEEEAAKAG). Residues 356–424 (ETWGKHKDAE…DSDDEKHDEL (69 aa)) form a disordered region. Residues 386 to 401 (EDDDDLDDEDAEDEDK) are compositionally biased toward acidic residues. A compositionally biased stretch (basic and acidic residues) spans 402–424 (ADEKADSDAEDGKDSDDEKHDEL). The Prevents secretion from ER motif lies at 421–424 (HDEL).

The protein belongs to the calreticulin family. Phosphorylated.

The protein resides in the endoplasmic reticulum lumen. Functionally, molecular calcium-binding chaperone promoting folding, oligomeric assembly and quality control in the ER via the calreticulin/calnexin cycle. This lectin may interact transiently with almost all of the monoglucosylated glycoproteins that are synthesized in the ER. The polypeptide is Calreticulin (Oryza sativa subsp. japonica (Rice)).